The following is a 387-amino-acid chain: S-adenosylmethionine synthase (387 aa).

An ATP-binding site is contributed by histidine 16. Aspartate 18 is a Mg(2+) binding site. A K(+)-binding site is contributed by glutamate 44. Glutamate 57 and glutamine 100 together coordinate L-methionine. Positions 100-110 are flexible loop; sequence QSADIAVGVDE. Residues 165-167, aspartate 241, 247-248, alanine 264, and lysine 268 each bind ATP; these read DAK and RK. L-methionine is bound at residue aspartate 241. Lysine 272 provides a ligand contact to L-methionine.

Belongs to the AdoMet synthase family. Homotetramer; dimer of dimers. It depends on Mg(2+) as a cofactor. Requires K(+) as cofactor.

Its subcellular location is the cytoplasm. It carries out the reaction L-methionine + ATP + H2O = S-adenosyl-L-methionine + phosphate + diphosphate. It participates in amino-acid biosynthesis; S-adenosyl-L-methionine biosynthesis; S-adenosyl-L-methionine from L-methionine: step 1/1. In terms of biological role, catalyzes the formation of S-adenosylmethionine (AdoMet) from methionine and ATP. The overall synthetic reaction is composed of two sequential steps, AdoMet formation and the subsequent tripolyphosphate hydrolysis which occurs prior to release of AdoMet from the enzyme. The polypeptide is S-adenosylmethionine synthase (Marinomonas sp. (strain MWYL1)).